The following is a 399-amino-acid chain: 26S proteasome regulatory subunit 10B homolog A (399 aa).

T2 bears the N-acetylthreonine mark. 180–187 contacts ATP; the sequence is GPPGTGKT. K203 is covalently cross-linked (Glycyl lysine isopeptide (Lys-Gly) (interchain with G-Cter in ubiquitin)).

The protein belongs to the AAA ATPase family. Component of the 19S regulatory particle (RP/PA700) base subcomplex of the 26S proteasome. The 26S proteasome is composed of a core protease (CP), known as the 20S proteasome, capped at one or both ends by the 19S regulatory particle (RP/PA700). The RP/PA700 complex is composed of at least 17 different subunits in two subcomplexes, the base and the lid, which form the portions proximal and distal to the 20S proteolytic core, respectively.

It is found in the cytoplasm. The protein resides in the nucleus. Its function is as follows. The 26S proteasome is involved in the ATP-dependent degradation of ubiquitinated proteins. The regulatory (or ATPase) complex confers ATP dependency and substrate specificity to the 26S complex. The protein is 26S proteasome regulatory subunit 10B homolog A (RPT4A) of Arabidopsis thaliana (Mouse-ear cress).